Here is a 72-residue protein sequence, read N- to C-terminus: Small ribosomal subunit protein bS18c (72 aa).

It belongs to the bacterial ribosomal protein bS18 family. Part of the 30S ribosomal subunit.

Its subcellular location is the plastid. It is found in the chloroplast. This Phaeodactylum tricornutum (strain CCAP 1055/1) protein is Small ribosomal subunit protein bS18c.